A 229-amino-acid polypeptide reads, in one-letter code: NAD(P)H-hydrate epimerase (229 aa).

A YjeF N-terminal domain is found at 10-224 (SREVDQIAIE…DIGIPPALLD (215 aa)). 57–61 (NNGGD) contributes to the (6S)-NADPHX binding site. K(+) is bound by residues Asn58 and Asp129. (6S)-NADPHX is bound by residues 133–139 (GTGIRGQ) and Asp167. A K(+)-binding site is contributed by Ser170.

It belongs to the NnrE/AIBP family. K(+) is required as a cofactor.

The enzyme catalyses (6R)-NADHX = (6S)-NADHX. It catalyses the reaction (6R)-NADPHX = (6S)-NADPHX. Catalyzes the epimerization of the S- and R-forms of NAD(P)HX, a damaged form of NAD(P)H that is a result of enzymatic or heat-dependent hydration. This is a prerequisite for the S-specific NAD(P)H-hydrate dehydratase to allow the repair of both epimers of NAD(P)HX. This is NAD(P)H-hydrate epimerase from Rubinisphaera brasiliensis (strain ATCC 49424 / DSM 5305 / JCM 21570 / IAM 15109 / NBRC 103401 / IFAM 1448) (Planctomyces brasiliensis).